The chain runs to 278 residues: Elongation factor Ts 1, mitochondrial (278 aa).

Belongs to the EF-Ts family.

The protein resides in the mitochondrion. Associates with the EF-Tu.GDP complex and induces the exchange of GDP to GTP. It remains bound to the aminoacyl-tRNA.EF-Tu.GTP complex up to the GTP hydrolysis stage on the ribosome. The sequence is that of Elongation factor Ts 1, mitochondrial from Trypanosoma cruzi (strain CL Brener).